Here is a 114-residue protein sequence, read N- to C-terminus: Fluoride-specific ion channel FluC 1 (114 aa).

The next 3 helical transmembrane spans lie at 28-48, 56-76, and 91-111; these read VFPW…GFLH, ILLL…TFQV, and IIYL…GSWL. Residues glycine 66 and threonine 69 each coordinate Na(+).

The protein belongs to the fluoride channel Fluc/FEX (TC 1.A.43) family.

Its subcellular location is the cell membrane. The enzyme catalyses fluoride(in) = fluoride(out). Its activity is regulated as follows. Na(+) is not transported, but it plays an essential structural role and its presence is essential for fluoride channel function. In terms of biological role, fluoride-specific ion channel. Important for reducing fluoride concentration in the cell, thus reducing its toxicity. The protein is Fluoride-specific ion channel FluC 1 of Ligilactobacillus salivarius (strain UCC118) (Lactobacillus salivarius).